The primary structure comprises 151 residues: Large ribosomal subunit protein bL9 (151 aa).

The protein belongs to the bacterial ribosomal protein bL9 family.

Binds to the 23S rRNA. The polypeptide is Large ribosomal subunit protein bL9 (Bordetella petrii (strain ATCC BAA-461 / DSM 12804 / CCUG 43448)).